Consider the following 271-residue polypeptide: Insulin-like growth factor-binding protein 5 (271 aa).

A signal peptide spans 1 to 19; it reads MVISVVLLLLAACAVPAQG. An IGFBP N-terminal domain is found at 22-102; sequence SFVHCEPCDE…LHGRGVCLNE (81 aa). Disulfide bonds link cysteine 26–cysteine 52, cysteine 29–cysteine 54, cysteine 37–cysteine 55, cysteine 44–cysteine 58, cysteine 66–cysteine 79, and cysteine 73–cysteine 99. Residues 109–121 are compositionally biased toward basic and acidic residues; the sequence is TKIERDSREHEEP. The tract at residues 109-129 is disordered; sequence TKIERDSREHEEPTTSEMAEE. Serine 115 carries the phosphoserine modification. Residues 188-262 form the Thyroglobulin type-1 domain; the sequence is QGPCRRHMEA…MEYVDGDFQC (75 aa). Cystine bridges form between cysteine 191–cysteine 218, cysteine 229–cysteine 240, and cysteine 242–cysteine 262.

Interacts with IGF1; this interaction enhances the growth stimulatory effects of IGF1 on fibroblasts. Interacts with CAV1; this interaction allows trafficking of IGFBP5 from the plasma membrane to the nucleus. Interacts with NCL; this interaction is necessary for IGFBP5 localization to the nucleus. In terms of tissue distribution, mostly in kidney.

The protein localises to the secreted. Its subcellular location is the cytoplasm. The protein resides in the nucleus. Its function is as follows. Multifunctional protein that plays a critical role in regulating the availability of IGFs to their receptors and thereby regulates IGF-mediated cellular processes including proliferation, differentiation, and apoptosis in a cell-type specific manner. Increases the cell proliferation of osteoblasts, intestinal smooth muscle cells and neuroblastoma cells. Enhances adhesion and survival of epithelial cells but decreases adhesion of mesenchymal cells. Once secreted, acts as a major mediator of mTORC1-dependent feedback inhibition of IGF1 signaling. Also plays a role in the induction of extracellular matrix (ECM) production and deposition independently of its nuclear translocation and binding to IGFs. Acts itself as a growth factor that can act independently of IGFs to regulate bone formation. Acts as a ligand for the ROR1 receptor which triggers formation of ROR1/HER2 heterodimer to enhance CREB oncogenic signaling. This chain is Insulin-like growth factor-binding protein 5 (Igfbp5), found in Rattus norvegicus (Rat).